Consider the following 369-residue polypeptide: Glutamate 5-kinase (369 aa).

Residue Lys-11 participates in ATP binding. Positions 51, 138, and 150 each coordinate substrate. ATP contacts are provided by residues 170-171 (TD) and 212-218 (TGGMATK). The 79-residue stretch at 277–355 (NGTIVIDDGA…QDIYAVLGYE (79 aa)) folds into the PUA domain.

The protein belongs to the glutamate 5-kinase family.

The protein localises to the cytoplasm. It catalyses the reaction L-glutamate + ATP = L-glutamyl 5-phosphate + ADP. The protein operates within amino-acid biosynthesis; L-proline biosynthesis; L-glutamate 5-semialdehyde from L-glutamate: step 1/2. Functionally, catalyzes the transfer of a phosphate group to glutamate to form L-glutamate 5-phosphate. The protein is Glutamate 5-kinase of Aliivibrio salmonicida (strain LFI1238) (Vibrio salmonicida (strain LFI1238)).